The following is a 175-amino-acid chain: Probable S-adenosyl-L-methionine-binding protein VirR (175 aa).

The TsaA-like domain occupies 35-165; that stretch reads LFFVGKIRTP…DRSLSKPLAP (131 aa). S-adenosyl-L-methionine-binding positions include 52 to 54, 90 to 91, Arg114, Thr124, and 145 to 148; these read PRQ, HE, and LDGT.

The protein belongs to the tRNA methyltransferase O family.

This is Probable S-adenosyl-L-methionine-binding protein VirR (virR) from Rhizobium radiobacter (Agrobacterium tumefaciens).